The chain runs to 327 residues: MQASSLAAVSSASPSAPARRWTVEEVLGLYDMPLMDLIWRAQGVHRENFDPNAIQRSTLLSVKTGGCSEDCSYCSQSARYDTDTERERLMPLDQVVAAAKAAKDKGASRFCMGAAWKGPKDNDLDRVLDMVREVKALGMQTCVTLGMLKDGQAEKLKDAGLDYYNHNLDTDKEFYGQVIKSHTHDDRLDTLDQVRDAGINVCSGGIIGMGESRKNRAALIVQLANLPKPPESVPINNLVPIPGTPLADNPRLDPFEFVRTIAAARIAMPTSWVRLSAGRQEMSDELQAMCFLAGANSMFYGDFLLTTGNPDIERDDALFARLGVKAI.

Residues 52–279 enclose the Radical SAM core domain; the sequence is NAIQRSTLLS…TSWVRLSAGR (228 aa). The [4Fe-4S] cluster site is built by Cys-67, Cys-71, and Cys-74. Cys-111, Cys-142, Cys-202, and Arg-274 together coordinate [2Fe-2S] cluster.

Belongs to the radical SAM superfamily. Biotin synthase family. As to quaternary structure, homodimer. It depends on [4Fe-4S] cluster as a cofactor. [2Fe-2S] cluster serves as cofactor.

The catalysed reaction is (4R,5S)-dethiobiotin + (sulfur carrier)-SH + 2 reduced [2Fe-2S]-[ferredoxin] + 2 S-adenosyl-L-methionine = (sulfur carrier)-H + biotin + 2 5'-deoxyadenosine + 2 L-methionine + 2 oxidized [2Fe-2S]-[ferredoxin]. Its pathway is cofactor biosynthesis; biotin biosynthesis; biotin from 7,8-diaminononanoate: step 2/2. Catalyzes the conversion of dethiobiotin (DTB) to biotin by the insertion of a sulfur atom into dethiobiotin via a radical-based mechanism. The chain is Biotin synthase from Dechloromonas aromatica (strain RCB).